The sequence spans 61 residues: Small ribosomal subunit protein uS14 (61 aa).

C24, C27, C40, and C43 together coordinate Zn(2+).

The protein belongs to the universal ribosomal protein uS14 family. Zinc-binding uS14 subfamily. Part of the 30S ribosomal subunit. Contacts proteins S3 and S10. Zn(2+) serves as cofactor.

In terms of biological role, binds 16S rRNA, required for the assembly of 30S particles and may also be responsible for determining the conformation of the 16S rRNA at the A site. The protein is Small ribosomal subunit protein uS14 of Ureaplasma parvum serovar 3 (strain ATCC 27815 / 27 / NCTC 11736).